We begin with the raw amino-acid sequence, 132 residues long: Guanyl-specific ribonuclease C2 (132 aa).

The N-terminal stretch at 1 to 26 (MLYNKLITIAALLVPALAAPQGLDVR) is a signal peptide. 2 disulfide bridges follow: Cys28–Cys36 and Cys32–Cys129. The active site involves His66. The active-site Proton acceptor is Glu84. Residue His118 is the Proton donor of the active site.

Belongs to the ribonuclease N1/T1 family.

The protein resides in the secreted. The enzyme catalyses [RNA] containing guanosine + H2O = an [RNA fragment]-3'-guanosine-3'-phosphate + a 5'-hydroxy-ribonucleotide-3'-[RNA fragment].. This chain is Guanyl-specific ribonuclease C2, found in Aspergillus clavatus (strain ATCC 1007 / CBS 513.65 / DSM 816 / NCTC 3887 / NRRL 1 / QM 1276 / 107).